We begin with the raw amino-acid sequence, 302 residues long: Stanniocalcin-2 (302 aa).

The N-terminal stretch at 1-24 (MCAERLGQFMTLALVLATFDPARG) is a signal peptide. The interval 23-44 (RGTDATNPPEGPQDRSPQQKGR) is disordered. Residues asparagine 73 and asparagine 74 are each glycosylated (N-linked (GlcNAc...) asparagine). The segment at 217–302 (RPPTAPPERQ…EQSEYSDIRR (86 aa)) is disordered. Residues 227-264 (PQVDRTKLSRAHHGEAGHHLPEPSSRETGRGAKGERGS) show a composition bias toward basic and acidic residues. Serine 250 and serine 251 each carry phosphoserine. At threonine 254 the chain carries Phosphothreonine.

It belongs to the stanniocalcin family. Homodimer; disulfide-linked.

The protein resides in the secreted. In terms of biological role, has an anti-hypocalcemic action on calcium and phosphate homeostasis. This chain is Stanniocalcin-2 (STC2), found in Pongo abelii (Sumatran orangutan).